The following is a 438-amino-acid chain: Aspartate aminotransferase, cytoplasmic (438 aa).

Gly73, Trp167, and Asn220 together coordinate L-aspartate. Lys284 bears the N6-(pyridoxal phosphate)lysine mark. Residue Arg412 coordinates L-aspartate.

It belongs to the class-I pyridoxal-phosphate-dependent aminotransferase family. Homodimer. The cofactor is pyridoxal 5'-phosphate.

It is found in the cytoplasm. The enzyme catalyses L-aspartate + 2-oxoglutarate = oxaloacetate + L-glutamate. In terms of biological role, plays a key role in amino acid metabolism. The protein is Aspartate aminotransferase, cytoplasmic (aatB) of Dictyostelium discoideum (Social amoeba).